The sequence spans 57 residues: Large ribosomal subunit protein bL33 (57 aa).

It belongs to the bacterial ribosomal protein bL33 family.

The sequence is that of Large ribosomal subunit protein bL33 from Shewanella denitrificans (strain OS217 / ATCC BAA-1090 / DSM 15013).